Consider the following 232-residue polypeptide: 2,3,4,5-tetrahydropyridine-2,6-dicarboxylate N-acetyltransferase (232 aa).

It belongs to the transferase hexapeptide repeat family. DapH subfamily.

The catalysed reaction is (S)-2,3,4,5-tetrahydrodipicolinate + acetyl-CoA + H2O = L-2-acetamido-6-oxoheptanedioate + CoA. Its pathway is amino-acid biosynthesis; L-lysine biosynthesis via DAP pathway; LL-2,6-diaminopimelate from (S)-tetrahydrodipicolinate (acetylase route): step 1/3. Its function is as follows. Catalyzes the transfer of an acetyl group from acetyl-CoA to tetrahydrodipicolinate. This chain is 2,3,4,5-tetrahydropyridine-2,6-dicarboxylate N-acetyltransferase, found in Streptococcus gordonii (strain Challis / ATCC 35105 / BCRC 15272 / CH1 / DL1 / V288).